The primary structure comprises 414 residues: MASGDTLYIATDGSEMPAEIVELHEIEVETIPVETIETTVVGEEEEEDDDDEDGGGGDHGGGGGHGHAGHHHHHHHHHHHPPMIALQPLVTDDPTQVHHHQEVILVQTREEVVGGDDSDGLRAEDGFEDQILIPVPAPAGGDDDYIEQTLVTVAAAGKSGGGGSSSSGGGRVKKGGGKKSGKKSYLSGGAGAAGGGGADPGNKKWEQKQVQIKTLEGEFSVTMWSSDEKKDIDHETVVEEQIIGENSPPDYSEYMTGKKLPPGGIPGIDLSDPKQLAEFARMKPRKIKEDDAPRTIACPHKGCTKMFRDNSAMRKHLHTHGPRVHVCAECGKAFVESSKLKRHQLVHTGEKPFQCTFEGCGKRFSLDFNLRTHVRIHTGDRPYVCPFDGCNKKFAQSTNLKSHILTHAKAKNNQ.

The interval 1–170 is interaction with the SMAD1/SMAD4 complex; that stretch reads MASGDTLYIA…GGGSSSSGGG (170 aa). Residues 33 to 81 are disordered; sequence VETIETTVVGEEEEEDDDDEDGGGGDHGGGGGHGHAGHHHHHHHHHHHP. A compositionally biased stretch (acidic residues) spans 42–55; it reads GEEEEEDDDDEDGG. Over residues 57 to 66 the composition is skewed to gly residues; that stretch reads GDHGGGGGHG. A compositionally biased stretch (basic residues) spans 67–81; sequence HAGHHHHHHHHHHHP. The segment at 116–260 is gly-rich region involved in interaction with HCFC1; the sequence is DDSDGLRAED…YSEYMTGKKL (145 aa). S118 carries the post-translational modification Phosphoserine; by CK2. Residues 157 to 203 form a disordered region; it reads GKSGGGGSSSSGGGRVKKGGGKKSGKKSYLSGGAGAAGGGGADPGNK. Gly residues predominate over residues 158-170; sequence KSGGGGSSSSGGG. The segment covering 171-182 has biased composition (basic residues); it reads RVKKGGGKKSGK. Residues K182 and K183 each participate in a glycyl lysine isopeptide (Lys-Gly) (interchain with G-Cter in SUMO2) cross-link. S187 carries the post-translational modification Phosphoserine. A compositionally biased stretch (gly residues) spans 188–199; that stretch reads GGAGAAGGGGAD. Glycyl lysine isopeptide (Lys-Gly) (interchain with G-Cter in SUMO2) cross-links involve residues K208 and K230. Position 247 is a phosphoserine (S247). Positions 257–341 are involved in nuclear matrix association; it reads GKKLPPGGIP…KAFVESSKLK (85 aa). Residues K286 and K288 each participate in a glycyl lysine isopeptide (Lys-Gly) (interchain with G-Cter in SUMO2) cross-link. Residues 295–414 are binding to DNA; it reads TIACPHKGCT…LTHAKAKNNQ (120 aa). 3 C2H2-type zinc fingers span residues 296–320, 325–347, and 353–377; these read IACPHKGCTKMFRDNSAMRKHLHTH, HVCAECGKAFVESSKLKRHQLVH, and FQCTFEGCGKRFSLDFNLRTHVRIH. C298, C303, H316, H320, C327, C330, H343, H347, C355, C360, H373, and H377 together coordinate Zn(2+). Residues 333-371 are involved in repression of activated transcription; the sequence is AFVESSKLKRHQLVHTGEKPFQCTFEGCGKRFSLDFNLR. An involved in masking transactivation domain region spans residues 371–397; sequence RTHVRIHTGDRPYVCPFDGCNKKFAQS. Residue T378 is modified to Phosphothreonine. The C2H2-type 4 zinc finger occupies 383 to 407; sequence YVCPFDGCNKKFAQSTNLKSHILTH. Positions 385, 390, 403, and 407 each coordinate Zn(2+). Glycyl lysine isopeptide (Lys-Gly) (interchain with G-Cter in SUMO2) cross-links involve residues K409 and K411.

It belongs to the YY transcription factor family. In terms of assembly, interacts with YAF2 through the region encompassing the first and second zinc fingers. Component of the chromatin remodeling INO80 complex; specifically part of a complex module associated with the DBINO domain of INO80. Interacts with EED and EZH2; the interactions are indicative for an association with the PRC2/EED-EZH2 complex. Interacts with SFMBT2. Found in a complex with SMAD1 and SMAD4. Found in a complex with YY1, SIN3A and HDAC1. Accessory component of the polycomb repressive deubiquitinase (PR-DUB) complex, at least composed of BAP1, one of ASXL1, ASXL2 or (probably) ASXL3 and one of MBD5 or MBD6; the PR-DUB core associates with a number of accessory proteins, including FOXK1, FOXK2, KDM1B, HCFC1, YY1 and OGT. Interacts (via Gly-rich region) with HCFC1; the interaction is direct. Interacts (via C-terminal zinc-finger domains) with BAP1 (via ULD domain); the interaction is direct and requires HCFC1. Post-translationally, phosphorylation at Ser-118 by CK2 prevents proteolytic cleavage by caspase-7 (CASP7) during apoptosis. Proteolytically cleaved by caspase-7 (CASP7) in response to apoptosis. Phosphorylation at Ser-118 protects against proteolytic cleavage. In terms of processing, transiently poly-ADP-ribosylated by PARP1 upon DNA damage, with the effect of decreasing affinity of YY1 to its cognate DNA binding sites. Post-translationally, ubiquitinated.

The protein localises to the nucleus matrix. Multifunctional transcription factor that exhibits positive and negative control on a large number of cellular and viral genes by binding to sites overlapping the transcription start site. Binds to the consensus sequence 5'-CCGCCATNTT-3'; some genes have been shown to contain a longer binding motif allowing enhanced binding; the initial CG dinucleotide can be methylated greatly reducing the binding affinity. The effect on transcription regulation is depending upon the context in which it binds and diverse mechanisms of action include direct activation or repression, indirect activation or repression via cofactor recruitment, or activation or repression by disruption of binding sites or conformational DNA changes. Its activity is regulated by transcription factors and cytoplasmic proteins that have been shown to abrogate or completely inhibit YY1-mediated activation or repression. For example, it acts as a repressor in absence of adenovirus E1A protein but as an activator in its presence. Acts synergistically with the SMAD1 and SMAD4 in bone morphogenetic protein (BMP)-mediated cardiac-specific gene expression. Binds to SMAD binding elements (SBEs) (5'-GTCT/AGAC-3') within BMP response element (BMPRE) of cardiac activating regions. May play an important role in development and differentiation. Proposed to recruit the PRC2/EED-EZH2 complex to target genes that are transcriptional repressed. Involved in DNA repair. In vitro, binds to DNA recombination intermediate structures (Holliday junctions). Plays a role in regulating enhancer activation. Recruits the PR-DUB complex to specific gene-regulatory regions. Functionally, proposed core component of the chromatin remodeling INO80 complex which is involved in transcriptional regulation, DNA replication and probably DNA repair; proposed to target the INO80 complex to YY1-responsive elements. This is Transcriptional repressor protein YY1 (YY1) from Homo sapiens (Human).